We begin with the raw amino-acid sequence, 218 residues long: Large ribosomal subunit protein uL4 (218 aa).

The disordered stretch occupies residues 55–83 (THATKTRGMVSGGGKKPWKQKGTGRARQG).

This sequence belongs to the universal ribosomal protein uL4 family. In terms of assembly, part of the 50S ribosomal subunit.

Its function is as follows. One of the primary rRNA binding proteins, this protein initially binds near the 5'-end of the 23S rRNA. It is important during the early stages of 50S assembly. It makes multiple contacts with different domains of the 23S rRNA in the assembled 50S subunit and ribosome. Functionally, forms part of the polypeptide exit tunnel. The chain is Large ribosomal subunit protein uL4 from Bifidobacterium longum (strain DJO10A).